Here is a 550-residue protein sequence, read N- to C-terminus: MLKTINPTQTQAWNALTAHFESAQDMDLKDLFAQDAARFDKFSARFGSDILVDYSKNLINEETLKHLFALAKETELSAAIKAMFSGEAINQTEGRAVLHTALRNRSNQPVLVDGEDVMPAVNAVLEKMKSFTDRVIGGEWKGYTGKAITDIVNIGIGGSDLGPYMVTEALAPYKNHLNLHFVSNVDGTHIVETLKKVDPETTLFLIASKTFTTQETMTNAHTARDWFLATAGDQAHVAKHFAALSTNAPAVSEFGIDTDNMFEFWDWVGGRYSLWSAIGLSIALAVGYDNFVELLEGAHEMDNHFVSTELESNIPVILALIGIWYNNFHGAESEAILPYDQYMHRFAAYFQQGNMESNGKYVDRNGNPVTYQTGPIIWGEPGTNGQHAFYQLIHQGTKLIPCDFIAPAVSHNPAGDHHQKLMSNFFAQTEALAFGKNEATVKAELVKAGKNAEEVAAIAPFKVFEGNRPTNSILVKQITPRTLGNLIAMYEHKIFVQGVIWNIFSFDQWGVELGKQLANQILPELADDSEISSHDSSTNGLINAFKAFKA.

The active-site Proton donor is the Glu356. Active-site residues include His387 and Lys515.

The protein belongs to the GPI family.

Its subcellular location is the cytoplasm. The enzyme catalyses alpha-D-glucose 6-phosphate = beta-D-fructose 6-phosphate. The protein operates within carbohydrate biosynthesis; gluconeogenesis. It functions in the pathway carbohydrate degradation; glycolysis; D-glyceraldehyde 3-phosphate and glycerone phosphate from D-glucose: step 2/4. Its function is as follows. Catalyzes the reversible isomerization of glucose-6-phosphate to fructose-6-phosphate. In Vibrio vulnificus (strain YJ016), this protein is Glucose-6-phosphate isomerase.